The primary structure comprises 153 residues: MAPKAEKKPAAKKPAEEEPAAEKAEKALAGKKPKAEKRLPAGKAEKGSGEGRKAGRKKAKKSVETYKIYIFKVLKQVHPDIGISSKAMSIMNSFINDIFEKLAGESAKLARYNKKPTITSREIQTSVRLVLPGELAKHAVSEGTKAVTKFTSA.

Composition is skewed to basic and acidic residues over residues 1–28 and 36–53; these read MAPK…EKAL and EKRL…EGRK. The tract at residues 1-61 is disordered; the sequence is MAPKAEKKPA…RKAGRKKAKK (61 aa). K7 and K37 each carry N6-acetyllysine. A Glycyl lysine isopeptide (Lys-Gly) (interchain with G-Cter in ubiquitin) cross-link involves residue K149.

The protein belongs to the histone H2B family. The nucleosome is a histone octamer containing two molecules each of H2A, H2B, H3 and H4 assembled in one H3-H4 heterotetramer and two H2A-H2B heterodimers. The octamer wraps approximately 147 bp of DNA. Can be acetylated to form H2BK6ac and H2BK33ac. In terms of processing, monoubiquitinated by BRE1 to form H2BK143ub1 and deubiquitinated by UBP26. Required for heterochromatic histone H3 di- and trimethylation at H3K4me. May give a specific tag for epigenetic transcriptional activation.

It is found in the nucleus. It localises to the chromosome. Functionally, core component of nucleosome. Nucleosomes wrap and compact DNA into chromatin, limiting DNA accessibility to the cellular machineries which require DNA as a template. Histones thereby play a central role in transcription regulation, DNA repair, DNA replication and chromosomal stability. DNA accessibility is regulated via a complex set of post-translational modifications of histones, also called histone code, and nucleosome remodeling. The sequence is that of Histone H2B.3 (H2B.3) from Oryza sativa subsp. indica (Rice).